The following is a 211-amino-acid chain: Large ribosomal subunit protein mL48 (211 aa).

A mitochondrion-targeting transit peptide spans 1 to 27; that stretch reads MSGTLGKVLGVWTNTVSKQGFSLLRFR. Residue K198 is modified to N6-succinyllysine.

Belongs to the mitochondrion-specific ribosomal protein mL48 family. In terms of assembly, component of the mitochondrial ribosome large subunit (39S) which comprises a 16S rRNA and about 50 distinct proteins. Interacts with OXA1L.

Its subcellular location is the mitochondrion. This chain is Large ribosomal subunit protein mL48 (Mrpl48), found in Mus musculus (Mouse).